The primary structure comprises 666 residues: Pantothenate kinase 1 (666 aa).

It belongs to the type II pantothenate kinase family.

The catalysed reaction is (R)-pantothenate + ATP = (R)-4'-phosphopantothenate + ADP + H(+). It participates in cofactor biosynthesis; coenzyme A biosynthesis; CoA from (R)-pantothenate: step 1/5. Regulated by feedback inhibition by malonyl-CoA. In terms of biological role, catalyzes the phosphorylation of pantothenate the first step in CoA biosynthesis. May play a role in the physiological regulation of the intracellular CoA concentration. This is Pantothenate kinase 1 from Oryza sativa subsp. japonica (Rice).